The following is an 86-amino-acid chain: Sodium channel neurotoxin MeuNaTxalpha-5 (86 aa).

Positions 1–19 (MNYLILISFALLVITGVES) are cleaved as a signal peptide. The 65-residue stretch at 21–85 (RDAYIAKPHN…VPIRIPGKCH (65 aa)) folds into the LCN-type CS-alpha/beta domain. 4 disulfides stabilise this stretch: C31–C84, C35–C57, C43–C67, and C47–C69. A propeptide (removed by a carboxypeptidase) is located at residue R86.

The protein belongs to the long (4 C-C) scorpion toxin superfamily. Sodium channel inhibitor family. Alpha subfamily. Expressed by the venom gland.

Its subcellular location is the secreted. Functionally, alpha toxins bind voltage-independently at site-3 of sodium channels (Nav) and inhibit the inactivation of the activated channels, thereby blocking neuronal transmission. This toxin inhibits inactivation of Nav1.6/SCN8A (EC(50)=790 nM) and drosophila DmNav1 (EC(50)=280 nM). The toxin (1 uM) does not significantly shift the midpoint of activation at the two channels, but induces a significant depolarizing shift in the V(1/2) of inactivation of the channels. Has antimicrobial activity. This is Sodium channel neurotoxin MeuNaTxalpha-5 from Mesobuthus eupeus (Lesser Asian scorpion).